The following is a 416-amino-acid chain: Serine hydroxymethyltransferase (416 aa).

(6S)-5,6,7,8-tetrahydrofolate is bound by residues L121 and 125-127; that span reads GHL. K229 bears the N6-(pyridoxal phosphate)lysine mark.

Belongs to the SHMT family. In terms of assembly, homodimer. Pyridoxal 5'-phosphate serves as cofactor.

The protein resides in the cytoplasm. The catalysed reaction is (6R)-5,10-methylene-5,6,7,8-tetrahydrofolate + glycine + H2O = (6S)-5,6,7,8-tetrahydrofolate + L-serine. The protein operates within one-carbon metabolism; tetrahydrofolate interconversion. Its pathway is amino-acid biosynthesis; glycine biosynthesis; glycine from L-serine: step 1/1. Functionally, catalyzes the reversible interconversion of serine and glycine with tetrahydrofolate (THF) serving as the one-carbon carrier. This reaction serves as the major source of one-carbon groups required for the biosynthesis of purines, thymidylate, methionine, and other important biomolecules. Also exhibits THF-independent aldolase activity toward beta-hydroxyamino acids, producing glycine and aldehydes, via a retro-aldol mechanism. The chain is Serine hydroxymethyltransferase from Azoarcus sp. (strain BH72).